The sequence spans 136 residues: Large ribosomal subunit protein uL16 (136 aa).

The protein belongs to the universal ribosomal protein uL16 family. Part of the 50S ribosomal subunit.

In terms of biological role, binds 23S rRNA and is also seen to make contacts with the A and possibly P site tRNAs. The polypeptide is Large ribosomal subunit protein uL16 (Mannheimia succiniciproducens (strain KCTC 0769BP / MBEL55E)).